The sequence spans 303 residues: Sulfate adenylyltransferase subunit 2 (303 aa).

The protein belongs to the PAPS reductase family. CysD subfamily. Heterodimer composed of CysD, the smaller subunit, and CysN.

It carries out the reaction sulfate + ATP + H(+) = adenosine 5'-phosphosulfate + diphosphate. Its pathway is sulfur metabolism; hydrogen sulfide biosynthesis; sulfite from sulfate: step 1/3. In terms of biological role, with CysN forms the ATP sulfurylase (ATPS) that catalyzes the adenylation of sulfate producing adenosine 5'-phosphosulfate (APS) and diphosphate, the first enzymatic step in sulfur assimilation pathway. APS synthesis involves the formation of a high-energy phosphoric-sulfuric acid anhydride bond driven by GTP hydrolysis by CysN coupled to ATP hydrolysis by CysD. This chain is Sulfate adenylyltransferase subunit 2, found in Bacteroides fragilis (strain YCH46).